The chain runs to 404 residues: CCA-adding enzyme (404 aa).

Residues G32 and R35 each coordinate ATP. CTP contacts are provided by G32 and R35. Residues D45 and D47 each contribute to the Mg(2+) site. ATP contacts are provided by R116, D159, R162, R165, and R168. CTP-binding residues include R116, D159, R162, R165, and R168.

This sequence belongs to the tRNA nucleotidyltransferase/poly(A) polymerase family. Bacterial CCA-adding enzyme type 3 subfamily. In terms of assembly, homodimer. Mg(2+) serves as cofactor.

It catalyses the reaction a tRNA precursor + 2 CTP + ATP = a tRNA with a 3' CCA end + 3 diphosphate. It carries out the reaction a tRNA with a 3' CCA end + 2 CTP + ATP = a tRNA with a 3' CCACCA end + 3 diphosphate. In terms of biological role, catalyzes the addition and repair of the essential 3'-terminal CCA sequence in tRNAs without using a nucleic acid template. Adds these three nucleotides in the order of C, C, and A to the tRNA nucleotide-73, using CTP and ATP as substrates and producing inorganic pyrophosphate. tRNA 3'-terminal CCA addition is required both for tRNA processing and repair. Also involved in tRNA surveillance by mediating tandem CCA addition to generate a CCACCA at the 3' terminus of unstable tRNAs. While stable tRNAs receive only 3'-terminal CCA, unstable tRNAs are marked with CCACCA and rapidly degraded. This is CCA-adding enzyme from Ligilactobacillus salivarius (strain UCC118) (Lactobacillus salivarius).